The sequence spans 257 residues: Zinc transporter ZupT (257 aa).

The next 8 membrane-spanning stretches (helical) occupy residues leucine 5–glycine 25, valine 32–methionine 52, glycine 61–leucine 81, alanine 109–valine 129, leucine 137–alanine 157, isoleucine 171–isoleucine 191, leucine 195–leucine 215, and glycine 236–isoleucine 256. Fe(2+)-binding residues include asparagine 120 and glutamate 123. Zn(2+)-binding residues include glutamate 123 and histidine 148. Fe(2+) is bound by residues asparagine 149, glutamate 152, and glutamate 181. A Zn(2+)-binding site is contributed by glutamate 152.

This sequence belongs to the ZIP transporter (TC 2.A.5) family. ZupT subfamily.

It is found in the cell inner membrane. It carries out the reaction Zn(2+)(in) = Zn(2+)(out). Its function is as follows. Mediates zinc uptake. May also transport other divalent cations. The polypeptide is Zinc transporter ZupT (Salmonella heidelberg (strain SL476)).